Consider the following 365-residue polypeptide: Poly(rC)-binding protein 2 (365 aa).

KH domains lie at 13 to 75 (TLTI…FAMI) and 97 to 162 (PVTL…VKQI). Lys-115 is covalently cross-linked (Glycyl lysine isopeptide (Lys-Gly) (interchain with G-Cter in SUMO2)). Residue Ser-173 is modified to Phosphoserine. Lys-185 participates in a covalent cross-link: Glycyl lysine isopeptide (Lys-Gly) (interchain with G-Cter in SUMO2). Residues Ser-189 and Ser-272 each carry the phosphoserine modification. The 65-residue stretch at 287-351 (TTSHELTIPN…ASISLAQYLI (65 aa)) folds into the KH 3 domain. Residue Lys-322 forms a Glycyl lysine isopeptide (Lys-Gly) (interchain with G-Cter in SUMO2) linkage. A phosphoserine mark is found at Ser-364 and Ser-365.

Identified in a mRNP complex, at least composed of DHX9, DDX3X, ELAVL1, HNRNPU, IGF2BP1, ILF3, PABPC1, PCBP2, PTBP2, STAU1, STAU2, SYNCRIP and YBX1. Interacts with IFIH1 and RNF135. Interacts with MAVS (via C-terminus) and ITCH (via WW domains). Interacts with CGAS; preventing the formation of liquid-like droplets in which CGAS is activated. Phosphorylated. The non-phosphorylated form(s) exhibited the strongest poly(rC)-binding activity. In terms of processing, (Microbial infection) Proteolytically cleaved by picornavirus proteinase 3CD. Detected in all tissues examined.

It is found in the nucleus. Its subcellular location is the cytoplasm. Single-stranded nucleic acid binding protein that binds preferentially to oligo dC. Major cellular poly(rC)-binding protein. Also binds poly(rU). Acts as a negative regulator of antiviral signaling. Negatively regulates cellular antiviral responses mediated by MAVS signaling. It acts as an adapter between MAVS and the E3 ubiquitin ligase ITCH, therefore triggering MAVS ubiquitination and degradation. Negativeley regulates the cGAS-STING pathway via interaction with CGAS, preventing the formation of liquid-like droplets in which CGAS is activated. Together with PCBP1, required for erythropoiesis, possibly by regulating mRNA splicing. Functionally, (Microbial infection) In case of infection by poliovirus, binds to the viral internal ribosome entry site (IRES) and stimulates the IRES-mediated translation. Also plays a role in initiation of viral RNA replication in concert with the viral protein 3CD. This chain is Poly(rC)-binding protein 2, found in Homo sapiens (Human).